Reading from the N-terminus, the 188-residue chain is Glutamyl endopeptidase 2 (188 aa).

Cys-14 and Cys-34 are joined by a disulfide. Catalysis depends on charge relay system residues His-33, Asp-62, and Ser-143. The cysteines at positions 137 and 163 are disulfide-linked.

The protein belongs to the peptidase S1 family. As to quaternary structure, monomer.

It catalyses the reaction Preferential cleavage: -Glu-|-Xaa- &gt;&gt; -Asp-|-Xaa-. Preference for Pro or Leu at P2 and Phe at P3. Cleavage of -Glu-|-Asp- and -Glu-|-Pro- bonds is slow.. Functionally, preferentially cleaves peptide bonds on the carboxyl-terminal side of glutamate. This Streptomyces griseus protein is Glutamyl endopeptidase 2 (sprE).